The following is a 622-amino-acid chain: Protein lev-9 (622 aa).

Residues 1 to 16 (MRFLLLLAISITYASA) form the signal peptide. The region spanning 17–61 (LSCPEVTLSQRPKHCKKECIADEDCKRNKRCMCDGECGLSCVNPI) is the WAP; atypical domain. Intrachain disulfides connect cysteine 19–cysteine 49, cysteine 35–cysteine 47, cysteine 41–cysteine 57, cysteine 64–cysteine 105, cysteine 91–cysteine 118, cysteine 124–cysteine 171, cysteine 154–cysteine 188, cysteine 193–cysteine 233, cysteine 219–cysteine 246, cysteine 251–cysteine 291, cysteine 277–cysteine 304, cysteine 309–cysteine 349, cysteine 335–cysteine 362, cysteine 366–cysteine 409, cysteine 395–cysteine 420, cysteine 425–cysteine 467, cysteine 452–cysteine 481, cysteine 486–cysteine 543, and cysteine 529–cysteine 556. 8 consecutive Sushi domains span residues 62 to 120 (AMCH…VCRL), 122 to 190 (LKCG…RCKA), 191 to 248 (RACP…NCKA), 249 to 306 (TECS…RCEE), 307 to 364 (IRCS…RCLA), 365 to 422 (SCRV…VCSP), 423 to 483 (LSCH…KCLP), and 484 to 558 (SWCE…KCVS). An N-linked (GlcNAc...) asparagine glycan is attached at asparagine 411. Residues 576–622 (SLPGRAVREYVDDELSTHRQHSGKCGIVSGKLERMIMQHSDNGVSVC) constitute a propeptide that is removed on maturation.

In terms of processing, proteolytic processing of the C-terminus is required for clustering activity but not for secretion nor traffic.

It localises to the synapse. Its subcellular location is the secreted. Scaffolding protein that is necessary to cluster acetylcholine receptors at neuromuscular junctions. The chain is Protein lev-9 (lev-9) from Caenorhabditis elegans.